The chain runs to 444 residues: N-succinylarginine dihydrolase (444 aa).

Substrate-binding positions include 19–28, Asn-110, and 137–138; these read AGLSFGNVAS and HR. Glu-174 is an active-site residue. Arg-214 contacts substrate. His-250 is an active-site residue. Asp-252 and Asn-362 together coordinate substrate. The Nucleophile role is filled by Cys-368.

The protein belongs to the succinylarginine dihydrolase family. In terms of assembly, homodimer.

The enzyme catalyses N(2)-succinyl-L-arginine + 2 H2O + 2 H(+) = N(2)-succinyl-L-ornithine + 2 NH4(+) + CO2. The protein operates within amino-acid degradation; L-arginine degradation via AST pathway; L-glutamate and succinate from L-arginine: step 2/5. Its function is as follows. Catalyzes the hydrolysis of N(2)-succinylarginine into N(2)-succinylornithine, ammonia and CO(2). The polypeptide is N-succinylarginine dihydrolase (Shewanella baltica (strain OS155 / ATCC BAA-1091)).